The following is a 120-amino-acid chain: Superoxide dismutase [Cu-Zn] (120 aa).

H11, H13, and H28 together coordinate Cu cation. Positions 16 to 52 (GDTTNGCMSTGPHFNPTGKEHGAPQDENRHAGDLGNI) are disordered. A disulfide bridge links C22 with C112. Zn(2+) contacts are provided by H28, H36, H45, and D48. Over residues 33-47 (GKEHGAPQDENRHAG) the composition is skewed to basic and acidic residues. H85 contacts Cu cation.

It belongs to the Cu-Zn superoxide dismutase family. In terms of assembly, homodimer. Requires Cu cation as cofactor. The cofactor is Zn(2+).

The protein localises to the cytoplasm. The catalysed reaction is 2 superoxide + 2 H(+) = H2O2 + O2. Destroys radicals which are normally produced within the cells and which are toxic to biological systems. This is Superoxide dismutase [Cu-Zn] (sodC) from Aspergillus japonicus.